A 1438-amino-acid chain; its full sequence is Pyochelin synthetase PchE (1438 aa).

The Carrier 1 domain maps to 6–85 (DSRTALRDWL…AWLDLLACAD (80 aa)). Serine 46 bears the O-(pantetheine 4'-phosphoryl)serine mark. A condensation/cyclization region spans residues 136-442 (RTRDVDPQRL…ARRQGQPRSA (307 aa)). Positions 563-950 (RAAEAPDADA…GRVDQQVKVR (388 aa)) are adenylation. The region spanning 1350 to 1425 (EPLEAHEQAL…GLARHLQVQT (76 aa)) is the Carrier 2 domain. The residue at position 1385 (serine 1385) is an O-(pantetheine 4'-phosphoryl)serine.

The protein belongs to the NRP synthetase family. Requires pantetheine 4'-phosphate as cofactor.

It catalyses the reaction holo-[peptidyl-carrier protein] + L-cysteine + ATP = L-cysteinyl-[peptidyl-carrier protein] + AMP + diphosphate. It functions in the pathway siderophore biosynthesis. The protein operates within antifungal biosynthesis. Involved in the biosynthesis of the siderophore pyochelin. Accepts salicylate activated by PchD at the first peptidyl carrier domain (ArCP), and activates and fixes one molecule of cysteine at the second peptidyl carrier domain (PCP1) via a thioester linkage to the phosphopanthetheine moiety. Then catalyzes the condensation reaction between the salicylate bound to the first site and the cysteine bound to the second site, and the cyclization of the cysteine to form the salicyl-thiazolinyl-S-PCP1 intermediate at the second site. When this intermediate is released by the action of a thioesterase, it produces the antifungal antibiotic dihydroaeruginoic acid (Dha or hydroxyphenyl-thiazolinyl-carboxylate). This Pseudomonas aeruginosa (strain ATCC 15692 / DSM 22644 / CIP 104116 / JCM 14847 / LMG 12228 / 1C / PRS 101 / PAO1) protein is Pyochelin synthetase PchE.